A 686-amino-acid polypeptide reads, in one-letter code: MDPKLEERARELRTLLQKASIAYYVHDAPILEDSVYDRLYRELQELERAYPELVTPDSPTQRVGEKPAEHFPTVFHRIPLYSLENAFNPEELEEWQERLLRVLGRAPVPDSRTEGELEYVCELKIDGAALALTYIEGLLERGATRGDGQAGEDITPNVRAIRSIPLRLATADPPPVLEVRGEVYLALAEFERINQERRSAGDPPFANPRNCAAGTLRQLDSRVVAARKLSFFAYALHWPEGWPAGDPPQTQWQCLQQLKELGFPVNPLSQVCRGLGEVIQFYERWRGAQLPYASDGVVVKLNSLRLQEEAGFTQKFPRWAIALKYPAQEVPTRIRAIVASVGRTGAVTPVAELEPVPLAGTLVSRASLHNADRLRELDVHIGDTAIVRKAGEIIPEVVGILKELRPADAVPYSLPSQCPECHTPLVRPPGEAVTRCPNPECPAKLRGQLQHWASRDALDIEGLGEKRAAQLVESLGVRTVADLYRLTPEQLQGLEGMGSRSSQKLVQAIQRSRQQPWERVLYGLGIPHVGVVTAQILAGHFPTPELLAQASAETIAQIYGIGAEVAEAVVAWFAEPAHRRLLQELQALGIPALPQQENPAVSQILAGKKFVITGTLPTLSRQQAKAWIESRGGKVTASVSRQTDYVVVGSDPGSKLEQAQQLGIPLLTEAELLALDPTVESGDLHP.

NAD(+) is bound by residues 33-37 (DSVYD), 82-83 (SL), and glutamate 122. The N6-AMP-lysine intermediate role is filled by lysine 124. NAD(+) is bound by residues arginine 145, glutamate 182, lysine 300, and lysine 324. Zn(2+) contacts are provided by cysteine 418, cysteine 421, cysteine 436, and cysteine 441. One can recognise a BRCT domain in the interval 600–686 (AVSQILAGKK…PTVESGDLHP (87 aa)).

Belongs to the NAD-dependent DNA ligase family. LigA subfamily. The cofactor is Mg(2+). Requires Mn(2+) as cofactor.

The enzyme catalyses NAD(+) + (deoxyribonucleotide)n-3'-hydroxyl + 5'-phospho-(deoxyribonucleotide)m = (deoxyribonucleotide)n+m + AMP + beta-nicotinamide D-nucleotide.. In terms of biological role, DNA ligase that catalyzes the formation of phosphodiester linkages between 5'-phosphoryl and 3'-hydroxyl groups in double-stranded DNA using NAD as a coenzyme and as the energy source for the reaction. It is essential for DNA replication and repair of damaged DNA. In Synechococcus sp. (strain JA-2-3B'a(2-13)) (Cyanobacteria bacterium Yellowstone B-Prime), this protein is DNA ligase.